Here is a 530-residue protein sequence, read N- to C-terminus: Autoinducer-2 kinase (530 aa).

This sequence belongs to the FGGY kinase family.

The protein localises to the cytoplasm. The catalysed reaction is (S)-4,5-dihydroxypentane-2,3-dione + ATP = (2S)-2-hydroxy-3,4-dioxopentyl phosphate + ADP + H(+). Catalyzes the phosphorylation of autoinducer-2 (AI-2) to phospho-AI-2, which subsequently inactivates the transcriptional regulator LsrR and leads to the transcription of the lsr operon. Phosphorylates the ring-open form of (S)-4,5-dihydroxypentane-2,3-dione (DPD), which is the precursor to all AI-2 signaling molecules, at the C5 position. This Enterobacter sp. (strain 638) protein is Autoinducer-2 kinase.